The chain runs to 406 residues: Probable G-protein coupled receptor tkr-1 (406 aa).

Residues 1 to 47 (MNQEFLIQLGERACKNAENLTLPAELEGIFFCAPSSRESLATQVFVA) are Extracellular-facing. A helical transmembrane segment spans residues 48-68 (IAFVLLMATAIIGNSVVMWII). Residues 69–76 (YQHKVMHY) lie on the Cytoplasmic side of the membrane. A helical transmembrane segment spans residues 77–97 (GFNYFLFNMAFADLLIALFNV). Over 98–115 (GTSWTYNLYYDWWYGDLC) the chain is Extracellular. Residues 116-136 (TLTSFFGIAPTTVSVCSMMAL) form a helical membrane-spanning segment. At 137–158 (SWDRCQAVVNPLQKRPLSRKRS) the chain is on the cytoplasmic side. The chain crosses the membrane as a helical span at residues 159–179 (VIAILIIWVVSTVTALPFAIA). At 180–204 (ASVNSLYTYDVVTSTVSKAHVCSAP) the chain is on the extracellular side. Residues 205–225 (VNTFFEKVLFGIQYALPIIIL) traverse the membrane as a helical segment. Topologically, residues 226-261 (GSTFTRIAVAFRATNEATDSSLKNNHTRAKSKAVKM) are cytoplasmic. The helical transmembrane segment at 262 to 282 (LFLMVVAFVVCWLPYHIYHAF) threads the bilayer. Residues 283 to 297 (ALEEFFDAARGKYAY) lie on the Extracellular side of the membrane. The chain crosses the membrane as a helical span at residues 298–318 (LLIYWIAMSSCAYNPIIYCFA). Over 319-406 (NERFRIGFRY…KVHLLSCHER (88 aa)) the chain is Cytoplasmic.

This sequence belongs to the G-protein coupled receptor 1 family.

Its subcellular location is the cell membrane. In terms of biological role, not known. Putative receptor. The protein is Probable G-protein coupled receptor tkr-1 (tkr-1) of Caenorhabditis elegans.